The primary structure comprises 202 residues: Arenicin-2 (202 aa).

An N-terminal signal peptide occupies residues methionine 1–cysteine 25. The propeptide occupies aspartate 26–arginine 181. The BRICHOS domain maps to glycine 73–leucine 168. Intrachain disulfides connect cysteine 100–cysteine 160 and cysteine 184–cysteine 201.

Functionally, has antimicrobial activity against the Gram-negative bacteria E.coli and P.mirabilis, the Gram-positive bacterium L.monocytogenes and the yeast C.albicans. This chain is Arenicin-2, found in Arenicola marina (Lugworm).